Consider the following 239-residue polypeptide: Fatty acid metabolism regulator protein (239 aa).

The HTH gntR-type domain occupies 6 to 74 (QSPAGFAEEY…HGKPTQVNNF (69 aa)). The H-T-H motif DNA-binding region spans 34 to 53 (ERELSELIGVTRTTLREVLQ).

Homodimer.

Its subcellular location is the cytoplasm. Its function is as follows. Multifunctional regulator of fatty acid metabolism. This Edwardsiella ictaluri (strain 93-146) protein is Fatty acid metabolism regulator protein.